The primary structure comprises 359 residues: Cytohesin-interacting protein (359 aa).

The region spanning L77–T166 is the PDZ domain. An interaction with CYTH1 region spans residues T166–K188. Residues T166–K188 adopt a coiled-coil conformation.

Interacts with CYTH1 and SNX27. As to expression, expressed in lymph nodes, thymus, spleen, lung, peripheral blood leukocytes and bone marrow.

The protein localises to the cytoplasm. It localises to the early endosome. Functionally, by its binding to cytohesin-1 (CYTH1), it modifies activation of ARFs by CYTH1 and its precise function may be to sequester CYTH1 in the cytoplasm. The protein is Cytohesin-interacting protein (CYTIP) of Homo sapiens (Human).